The sequence spans 899 residues: MRLRKLLIFIPAAVILLFFLLTDLLSDLFWYASVGYSPVFLTILITSAALFVIGTLLFFAFSYGNVILAARTGAGAFGVEKEIQYLGGIACAVAAGITGLSLSSSWEIILAFLDQTPFHISDPVFGLDISFYIFSLPFYTILIQYLLALFVFTLIISSVMYAAHRAGVRIDEYGVFQYIPGPFPFGLSWKDTVGRFLPQVNCLLFLIFTTLAAFLWLTRYSTLYTSKGTVIGAGYTDVTITIPALTILTVIAFLIGLLFLLNEKIKRSEMIAYGIGGFFIIAILSAGAGFLVQTLIVEPNEFNLERTYLGYNINSTLDGYNLANINARDFPVLYNLTETDIRNNNATISNIRLWDWRPMKTTLEQLQLFRTYYTFNDVDVDRYWLDGNYKQVHISAREMNSYNLPQQAQTWVNRHLVFTHGYGAVMSPVDRITTNGLPEFFVKDIPPSSPFPSLSLDHPQIYYGEGDIPYCITNTRTEEFDYPSGDENIYSLYDGNAGVELSLLPRLVYAIQLGSVELLVSGSLTPDSKLHLYRNILERTSKIAPFLTYDSDPYVVMSDGKLSWIIDAYTTSDRYPYSEPVRTGELSAKSMNYVRNSVKVIVDAYTGDIRYYIVDPDDPVIQTYAKMFPGLFRPVDDIPDDLRSHLRYPHGLFNIQAEIYGIYHMTDPRVFYNREDAWVIPDEIYRKTQQRFEPYYVIMKLPGEEREEFILMLPFTPRNKQNLIGWMAVRCDPDRYGEMIVYQFSKQELTYGPMQIEARIDQDTDISQSITLWSQAGSSVVRGNTLIIPVEQSLLYVEPLYLEATQKGTLPQLQRVIVSYGDKLTMQPTLNEALQVIFGGRQARQDITKRVEQPGDDQSSSILGQISGLYKQAQQALSSGSLGEYQQFVDRIGTLVSGY.

The next 7 membrane-spanning stretches (helical) occupy residues 6 to 26 (LLIF…DLLS), 39 to 59 (VFLT…LLFF), 93 to 113 (VAAG…LAFL), 136 to 156 (LPFY…TLII), 196 to 216 (FLPQ…AFLW), 240 to 260 (ITIP…LLFL), and 271 to 291 (IAYG…AGFL).

This sequence belongs to the UPF0182 family.

The protein resides in the cell membrane. In Methanospirillum hungatei JF-1 (strain ATCC 27890 / DSM 864 / NBRC 100397 / JF-1), this protein is UPF0182 protein Mhun_1303.